Reading from the N-terminus, the 42-residue chain is Photosystem II reaction center protein J (42 aa).

A helical transmembrane segment spans residues 10-30 (IPLWLVGTVVGTLALGLVALF).

The protein belongs to the PsbJ family. As to quaternary structure, PSII is composed of 1 copy each of membrane proteins PsbA, PsbB, PsbC, PsbD, PsbE, PsbF, PsbH, PsbI, PsbJ, PsbK, PsbL, PsbM, PsbT, PsbX, PsbY, PsbZ, Psb30/Ycf12, at least 3 peripheral proteins of the oxygen-evolving complex and a large number of cofactors. It forms dimeric complexes.

The protein resides in the plastid. It is found in the chloroplast thylakoid membrane. One of the components of the core complex of photosystem II (PSII). PSII is a light-driven water:plastoquinone oxidoreductase that uses light energy to abstract electrons from H(2)O, generating O(2) and a proton gradient subsequently used for ATP formation. It consists of a core antenna complex that captures photons, and an electron transfer chain that converts photonic excitation into a charge separation. This is Photosystem II reaction center protein J from Oltmannsiellopsis viridis (Marine flagellate).